The primary structure comprises 486 residues: Carboxypeptidase Y homolog ARB_07161 (486 aa).

Positions 1–17 (MKGLLSLLLVGAANALA) are cleaved as a signal peptide. A glycan (N-linked (GlcNAc...) asparagine) is linked at Asn-111. The active site involves Ser-241. Disulfide bonds link Cys-281–Cys-305, Cys-288–Cys-298, and Cys-327–Cys-334. Residue Asp-403 is part of the active site. Cys-406 serves as a coordination point for substrate. N-linked (GlcNAc...) asparagine glycosylation is present at Asn-430. The active site involves His-462.

This sequence belongs to the peptidase S10 family.

It is found in the secreted. It carries out the reaction Release of a C-terminal amino acid with broad specificity.. Involved in degradation of small peptides. The sequence is that of Carboxypeptidase Y homolog ARB_07161 from Arthroderma benhamiae (strain ATCC MYA-4681 / CBS 112371) (Trichophyton mentagrophytes).